The following is a 61-amino-acid chain: Putative antitoxin PYRAB11980 (61 aa).

Belongs to the UPF0165 family.

Functionally, possibly the antitoxin component of a type II toxin-antitoxin (TA) system. This chain is Putative antitoxin PYRAB11980, found in Pyrococcus abyssi (strain GE5 / Orsay).